Reading from the N-terminus, the 335-residue chain is Biotin synthase (335 aa).

The region spanning 46–274 (YNIQLASLFS…KSKIRLSAGR (229 aa)) is the Radical SAM core domain. 3 residues coordinate [4Fe-4S] cluster: Cys61, Cys65, and Cys68. Residues Cys105, Cys137, Cys197, and Arg269 each contribute to the [2Fe-2S] cluster site.

It belongs to the radical SAM superfamily. Biotin synthase family. Homodimer. The cofactor is [4Fe-4S] cluster. It depends on [2Fe-2S] cluster as a cofactor.

It catalyses the reaction (4R,5S)-dethiobiotin + (sulfur carrier)-SH + 2 reduced [2Fe-2S]-[ferredoxin] + 2 S-adenosyl-L-methionine = (sulfur carrier)-H + biotin + 2 5'-deoxyadenosine + 2 L-methionine + 2 oxidized [2Fe-2S]-[ferredoxin]. It participates in cofactor biosynthesis; biotin biosynthesis; biotin from 7,8-diaminononanoate: step 2/2. In terms of biological role, catalyzes the conversion of dethiobiotin (DTB) to biotin by the insertion of a sulfur atom into dethiobiotin via a radical-based mechanism. This Prochlorococcus marinus (strain AS9601) protein is Biotin synthase.